Reading from the N-terminus, the 156-residue chain is Ribosomal RNA large subunit methyltransferase H (156 aa).

Residues Leu73, Gly104, and 123–128 (LSSLTL) each bind S-adenosyl-L-methionine.

This sequence belongs to the RNA methyltransferase RlmH family. As to quaternary structure, homodimer.

It is found in the cytoplasm. It catalyses the reaction pseudouridine(1915) in 23S rRNA + S-adenosyl-L-methionine = N(3)-methylpseudouridine(1915) in 23S rRNA + S-adenosyl-L-homocysteine + H(+). Functionally, specifically methylates the pseudouridine at position 1915 (m3Psi1915) in 23S rRNA. This is Ribosomal RNA large subunit methyltransferase H from Neisseria meningitidis serogroup C / serotype 2a (strain ATCC 700532 / DSM 15464 / FAM18).